Here is a 388-residue protein sequence, read N- to C-terminus: MNLRKMTELNITGKKILIRTDLNVPIKNGVIQSDARILAALPTIEIAIEKKAKIIILSHLGRPKEGCYTKKYSLFPIFEYLKKKLKKTKIYFSDNHLKKVEINSGEILILENVRFNVGELKNDENLSKEYANLCDIFVMDAFGSAHRMQSSTYGIGKFVKIACAGPLLISEINNLKKALKNPKRPMVAIVGGAKVSTKFNVLNKLAAISDTIIVGGGIANTFLAIDNKIGKSLHEPKFILKAKKLRDKYNNIVIPIDSRVGKNFSHKEKCTIKLSSNIEKNEEIMDLGDKTIKKIIKILKKSKTILWNGPVGVFEFPNFRKGTEMIAKAIAENNGFSIAGGGDTLSVIDMFQIKDKISYISTGGGAFLEFIEGKKLPAMKMLEENFHK.

Residues 21–23 (DLN), Arg-36, 59–62 (HLGR), Arg-114, and Arg-147 contribute to the substrate site. Residues Lys-198, Glu-315, and 341–344 (GGDT) each bind ATP.

Belongs to the phosphoglycerate kinase family. In terms of assembly, monomer.

Its subcellular location is the cytoplasm. It carries out the reaction (2R)-3-phosphoglycerate + ATP = (2R)-3-phospho-glyceroyl phosphate + ADP. Its pathway is carbohydrate degradation; glycolysis; pyruvate from D-glyceraldehyde 3-phosphate: step 2/5. This chain is Phosphoglycerate kinase, found in Buchnera aphidicola subsp. Schizaphis graminum (strain Sg).